A 192-amino-acid chain; its full sequence is Phosphoheptose isomerase (192 aa).

In terms of domain architecture, SIS spans 37-192 (LADSFKAGGK…IQLIEKEMVK (156 aa)). 52–54 (NGG) contributes to the substrate binding site. 2 residues coordinate Zn(2+): His61 and Glu65. Residues Glu65, 93-94 (ND), 119-121 (STS), Ser124, and Gln172 contribute to the substrate site. Zn(2+)-binding residues include Gln172 and His180.

Belongs to the SIS family. GmhA subfamily. Homotetramer. It depends on Zn(2+) as a cofactor.

Its subcellular location is the cytoplasm. The enzyme catalyses 2 D-sedoheptulose 7-phosphate = D-glycero-alpha-D-manno-heptose 7-phosphate + D-glycero-beta-D-manno-heptose 7-phosphate. It functions in the pathway carbohydrate biosynthesis; D-glycero-D-manno-heptose 7-phosphate biosynthesis; D-glycero-alpha-D-manno-heptose 7-phosphate and D-glycero-beta-D-manno-heptose 7-phosphate from sedoheptulose 7-phosphate: step 1/1. Catalyzes the isomerization of sedoheptulose 7-phosphate in D-glycero-D-manno-heptose 7-phosphate. This Salmonella dublin (strain CT_02021853) protein is Phosphoheptose isomerase.